Consider the following 285-residue polypeptide: Steroidogenic acute regulatory protein, mitochondrial (285 aa).

The N-terminal 63 residues, 1-63 (MLLATFKLCA…RRSSLLGSRL (63 aa)), are a transit peptide targeting the mitochondrion. Phosphoserine; by PKA is present on residues Ser57 and Ser195. The START domain occupies 67 to 280 (LYSDQELAYL…LRKRLESHPA (214 aa)).

As to quaternary structure, may interact with TSPO. In terms of tissue distribution, expressed in gonads, adrenal cortex and kidney.

The protein localises to the mitochondrion. It carries out the reaction cholesterol(in) = cholesterol(out). It participates in steroid metabolism; cholesterol metabolism. Its function is as follows. Plays a key role in steroid hormone synthesis by enhancing the metabolism of cholesterol into pregnenolone. Mediates the transfer of cholesterol from the outer mitochondrial membrane to the inner mitochondrial membrane where it is cleaved to pregnenolone. In Homo sapiens (Human), this protein is Steroidogenic acute regulatory protein, mitochondrial (STAR).